A 120-amino-acid polypeptide reads, in one-letter code: Large ribosomal subunit protein uL18 (120 aa).

The protein belongs to the universal ribosomal protein uL18 family. As to quaternary structure, part of the 50S ribosomal subunit; part of the 5S rRNA/L5/L18/L25 subcomplex. Contacts the 5S and 23S rRNAs.

Functionally, this is one of the proteins that bind and probably mediate the attachment of the 5S RNA into the large ribosomal subunit, where it forms part of the central protuberance. This chain is Large ribosomal subunit protein uL18, found in Geobacillus kaustophilus (strain HTA426).